A 303-amino-acid chain; its full sequence is Quinolinate synthase (303 aa).

Iminosuccinate-binding residues include histidine 25 and serine 42. Cysteine 87 is a binding site for [4Fe-4S] cluster. Iminosuccinate contacts are provided by residues 113-115 (YVN) and serine 130. Cysteine 174 contacts [4Fe-4S] cluster. Residues 200 to 202 (HPE) and threonine 217 contribute to the iminosuccinate site. A [4Fe-4S] cluster-binding site is contributed by cysteine 260.

The protein belongs to the quinolinate synthase family. Type 2 subfamily. As to quaternary structure, homodimer. It depends on [4Fe-4S] cluster as a cofactor.

Its subcellular location is the cytoplasm. The enzyme catalyses iminosuccinate + dihydroxyacetone phosphate = quinolinate + phosphate + 2 H2O + H(+). The protein operates within cofactor biosynthesis; NAD(+) biosynthesis; quinolinate from iminoaspartate: step 1/1. Its function is as follows. Catalyzes the condensation of iminoaspartate with dihydroxyacetone phosphate to form quinolinate. This chain is Quinolinate synthase, found in Pyrococcus furiosus (strain ATCC 43587 / DSM 3638 / JCM 8422 / Vc1).